The primary structure comprises 256 residues: 6-carboxyhexanoate--CoA ligase (256 aa).

The protein belongs to the BioW family. In terms of assembly, homodimer. The cofactor is Mg(2+).

The catalysed reaction is heptanedioate + ATP + CoA = 6-carboxyhexanoyl-CoA + AMP + diphosphate. It functions in the pathway metabolic intermediate metabolism; pimeloyl-CoA biosynthesis; pimeloyl-CoA from pimelate: step 1/1. Functionally, catalyzes the transformation of pimelate into pimeloyl-CoA with concomitant hydrolysis of ATP to AMP. This is 6-carboxyhexanoate--CoA ligase from Bacillus velezensis (strain DSM 23117 / BGSC 10A6 / LMG 26770 / FZB42) (Bacillus amyloliquefaciens subsp. plantarum).